A 146-amino-acid chain; its full sequence is Kappa-casein (146 aa).

Residues Thr-107 and Thr-112 are each glycosylated (O-linked (GalNAc...) threonine). Ser-125 carries the phosphoserine; alternate modification. O-linked (GalNAc...) serine; alternate glycosylation occurs at Ser-125. The O-linked (GalNAc...) threonine glycan is linked to Thr-142. Ser-143 carries the post-translational modification Phosphoserine.

It belongs to the kappa-casein family. Mammary gland specific. Secreted in milk.

Its subcellular location is the secreted. Kappa-casein stabilizes micelle formation, preventing casein precipitation in milk. The chain is Kappa-casein (CSN3) from Tapirus indicus (Asiatic tapir).